The primary structure comprises 394 residues: MNKLIAGLEQQLAQLDAQSLRRRRRTTESPCAPRVQVDGRAMLAFCSNDYLGLAAHPRIIDALQQGASLYGAGSGASHLISGHSRAHAELEERLAEFVAPQIADARALYFCTGYMANIAILSALSGSGADLFSESLNHASLIDGARLSRANVQVYPHGDLDKLAILLAASTADNKMVVTDSVFSMDGDLAALPQLLALCEQHGAWLVVDDAHGFGVLGEHGRGVLEHFALRSPNLVYMGTLGKAAGVAGAFVAAHKSVIEWMVQRARPYIYTTAAPPAVAHALLTSLEIIGGAEGAERRAHLQTLIAQWRSALQLQRWRALASDTAIQPVVIGANDVAMKIAAALYEQNIWVPAIRPPTVPAGTARLRVTLSAAHTAEQVTQLVGALQQLEQQD.

A substrate-binding site is contributed by R22. Position 113 to 114 (113 to 114) interacts with pyridoxal 5'-phosphate; it reads GY. H138 serves as a coordination point for substrate. S184, H212, and T240 together coordinate pyridoxal 5'-phosphate. At K243 the chain carries N6-(pyridoxal phosphate)lysine. A substrate-binding site is contributed by T359.

It belongs to the class-II pyridoxal-phosphate-dependent aminotransferase family. BioF subfamily. Homodimer. Pyridoxal 5'-phosphate is required as a cofactor.

It carries out the reaction 6-carboxyhexanoyl-[ACP] + L-alanine + H(+) = (8S)-8-amino-7-oxononanoate + holo-[ACP] + CO2. The protein operates within cofactor biosynthesis; biotin biosynthesis. Its function is as follows. Catalyzes the decarboxylative condensation of pimeloyl-[acyl-carrier protein] and L-alanine to produce 8-amino-7-oxononanoate (AON), [acyl-carrier protein], and carbon dioxide. This chain is 8-amino-7-oxononanoate synthase, found in Janthinobacterium sp. (strain Marseille) (Minibacterium massiliensis).